The sequence spans 142 residues: Potassium voltage-gated channel subfamily E regulatory beta subunit 5 (142 aa).

N-linked (GlcNAc...) asparagine glycosylation is found at Asn-2 and Asn-25. The helical transmembrane segment at 61 to 81 (LYILLIMIFYACLAGGLILAY) threads the bilayer. At 82–142 (TRSRKLVEAK…PALAQGAERV (61 aa)) the chain is on the cytoplasmic side. The tract at residues 119–142 (SQAEGRRQLASEGLPALAQGAERV) is disordered.

It belongs to the potassium channel KCNE family. Interacts with KCNQ1; impairs KCNQ1 localization in lipid rafts and only conducts current upon strong and continued depolarization. As to expression, highly expressed in heart, skeletal muscle, brain, spinal cord and placenta.

The protein localises to the membrane. Its function is as follows. Potassium channel ancillary subunit that is essential for generation of some native K(+) currents by virtue of formation of heteromeric ion channel complex with voltage-gated potassium (Kv) channel pore-forming alpha subunits. Functions as an inhibitory beta-subunit of the repolarizing cardiac potassium ion channel KCNQ1. The protein is Potassium voltage-gated channel subfamily E regulatory beta subunit 5 (KCNE5) of Homo sapiens (Human).